The following is a 273-amino-acid chain: DNA repair protein RecO (273 aa).

Belongs to the RecO family.

Involved in DNA repair and RecF pathway recombination. This chain is DNA repair protein RecO, found in Saccharopolyspora erythraea (strain ATCC 11635 / DSM 40517 / JCM 4748 / NBRC 13426 / NCIMB 8594 / NRRL 2338).